The primary structure comprises 922 residues: MATEKGHSRDDEERVPLTRGSTEFRNSIDSFDYSSSTASLSLAVIDRINNSTQDAGLSEKGPRDDDDDRYWDDDVEYDVEDADYIPSGGKPMHKSVKIALWSLLFLSLGGWSLAFVLFIFRSHDTYQTPILSEDNISSGGLRGDRITLDDVLGEEWMPRHHFISWFPGPNGEDGLLLEKDGPGSTGYLRVEDIVSRKDTNSSKGSIVLMQKNTFTVGGETVICSQVWPSPDLKTVLVLSEKKQNWRHSFTGKYWLFDVDTQTGQPLDPAAQDQRIQLASWSHKSDAVVFTRDNNMFLRKLSSKEVITITSDGGVDLLYGVPDWVYEEEVFSGNSATWWAHDGNYIAFLRTNESAVPEYPIQYFVSRPSGEDPNLGEENYPEVREIKYPKAGAPNPIVDLQFYDIRKGEIFSVDVADRFPDDNRLIIEVLWASNGKVLVRETNRESDILIIAAIDVLSRTGKIVRKEDINALDGGWVEPTQSTRFIPADPSNDRPEDGYIDTVIHEGRDQLAYFTPLDNPKPLILTKGHSEVVNSPSGVDLKRGLVYFVVAGNEPWERHVYSVKFDGTALQPVTNVSESSYYDVSFSDGAGYALLNFRGPKVPWQKVISTPANENPFEEIIEQNNHLSRKLRLFSLESKVFQYINIDGFSLPVLERRPPNFDPTKKYPVLFYLYGGPGSQTVDKKFGVDFQSYVASTLGYIVVTVDGRGTGYIGRKSLSLVRGKLGHYEARDQIEVAKKWAAKPYVDESRMAIWGWSYGGFMTLKTIEEDGGRTFQYGMAVAPVTDWRYYDSIYAERYMHTPQHNPQGYDSSAISNTTALANSVRFLVMHGTADDNVHIQNTLTLLDKLDLANVDNYDVHVFPDSNHNINYHNAHKMVYTRLADWLVNAFNGQWLKTNNPTPNDSLFRRVATWAGLYKFKHLC.

Basic and acidic residues predominate over residues Met1 to Pro16. The disordered stretch occupies residues Met1 to Ser21. Residues Met1–Ala99 lie on the Cytoplasmic side of the membrane. A helical; Signal-anchor for type II membrane protein transmembrane segment spans residues Leu100–Phe120. Residues Arg121–Cys922 lie on the Vacuolar side of the membrane. 4 N-linked (GlcNAc...) asparagine glycosylation sites follow: Asn135, Asn200, Asn351, and Asn574. The Charge relay system role is filled by Ser756. Residue Asn815 is glycosylated (N-linked (GlcNAc...) asparagine). Catalysis depends on charge relay system residues Asp833 and His866. Asn902 carries N-linked (GlcNAc...) asparagine glycosylation.

It belongs to the peptidase S9B family.

The protein localises to the vacuole membrane. It carries out the reaction Release of an N-terminal dipeptide, Xaa-Yaa-|-Zaa-, from a polypeptide, preferentially when Yaa is Pro, provided Zaa is neither Pro nor hydroxyproline.. Its function is as follows. Type IV dipeptidyl-peptidase which removes N-terminal dipeptides sequentially from polypeptides having unsubstituted N-termini provided that the penultimate residue is proline. The protein is Probable dipeptidyl-aminopeptidase B (DAPB) of Ajellomyces capsulatus (strain NAm1 / WU24) (Darling's disease fungus).